The following is a 415-amino-acid chain: Gamma-glutamyl phosphate reductase (415 aa).

This sequence belongs to the gamma-glutamyl phosphate reductase family.

Its subcellular location is the cytoplasm. It carries out the reaction L-glutamate 5-semialdehyde + phosphate + NADP(+) = L-glutamyl 5-phosphate + NADPH + H(+). It functions in the pathway amino-acid biosynthesis; L-proline biosynthesis; L-glutamate 5-semialdehyde from L-glutamate: step 2/2. In terms of biological role, catalyzes the NADPH-dependent reduction of L-glutamate 5-phosphate into L-glutamate 5-semialdehyde and phosphate. The product spontaneously undergoes cyclization to form 1-pyrroline-5-carboxylate. In Cutibacterium acnes (strain DSM 16379 / KPA171202) (Propionibacterium acnes), this protein is Gamma-glutamyl phosphate reductase.